A 448-amino-acid chain; its full sequence is Probable rhamnogalacturonase E (448 aa).

An N-terminal signal peptide occupies residues 1 to 22 (MTWSTSFLVATSLLSIINSVHA). Cysteine 43 and cysteine 69 are joined by a disulfide. Residues asparagine 54, asparagine 92, and asparagine 131 are each glycosylated (N-linked (GlcNAc...) asparagine). The Proton donor role is filled by aspartate 221. Residues cysteine 223 and cysteine 240 are joined by a disulfide bond. N-linked (GlcNAc...) asparagine glycans are attached at residues asparagine 256 and asparagine 284. Residue histidine 296 is part of the active site. N-linked (GlcNAc...) asparagine glycosylation is found at asparagine 323 and asparagine 328. 2 disulfide bridges follow: cysteine 346–cysteine 352 and cysteine 374–cysteine 382.

It belongs to the glycosyl hydrolase 28 family.

It localises to the secreted. Pectinolytic enzymes consist of four classes of enzymes: pectine lyase, polygalacturonase, pectin methylesterase and rhamnogalacturonase. Hydrolyzes alpha-D-galacturonopyranosyl-(1,2)-alpha-L-rhamnopyranosyl linkages in the backbone of the hairy regions of pectins. This Aspergillus niger (strain ATCC MYA-4892 / CBS 513.88 / FGSC A1513) protein is Probable rhamnogalacturonase E (rhgE).